A 446-amino-acid chain; its full sequence is UDP-N-acetylmuramoylalanine--D-glutamate ligase (446 aa).

Residue 118-124 coordinates ATP; it reads GSNGKST.

Belongs to the MurCDEF family.

It is found in the cytoplasm. It carries out the reaction UDP-N-acetyl-alpha-D-muramoyl-L-alanine + D-glutamate + ATP = UDP-N-acetyl-alpha-D-muramoyl-L-alanyl-D-glutamate + ADP + phosphate + H(+). The protein operates within cell wall biogenesis; peptidoglycan biosynthesis. Functionally, cell wall formation. Catalyzes the addition of glutamate to the nucleotide precursor UDP-N-acetylmuramoyl-L-alanine (UMA). In Pseudoalteromonas translucida (strain TAC 125), this protein is UDP-N-acetylmuramoylalanine--D-glutamate ligase.